Reading from the N-terminus, the 576-residue chain is Coilin (576 aa).

Ser105 is subject to Phosphoserine. At Thr122 the chain carries Phosphothreonine. Disordered regions lie at residues 125-330 and 352-389; these read DCKY…CLMS and RPGP…SLPA. Glycyl lysine isopeptide (Lys-Gly) (interchain with G-Cter in SUMO2) cross-links involve residues Lys127, Lys151, and Lys160. Ser184 carries the post-translational modification Phosphoserine; by VRK1 and VRK2. Residues Lys204 and Lys209 each participate in a glycyl lysine isopeptide (Lys-Gly) (interchain with G-Cter in SUMO2) cross-link. Over residues 214-225 the composition is skewed to polar residues; it reads QRCSSPKGSARN. The stretch at 223 to 226 is one 1-1 repeat; that stretch reads ARNS. Positions 223–271 are 2 X 4 AA repeats of A-R-N-S; that stretch reads ARNSLVKAKRKGSVSVCSKESPSSSSESESCDESISDGPSKVTLEARNS. Residues 235-250 are compositionally biased toward low complexity; that stretch reads SVSVCSKESPSSSSES. A phosphoserine mark is found at Ser248, Ser250, Ser256, Ser271, and Ser272. Residues 268–271 form a 1-2 repeat; it reads ARNS. Positions 270–285 are enriched in basic and acidic residues; it reads NSSEKLPTELSKEEPS. Residues Lys274 and Lys281 each participate in a glycyl lysine isopeptide (Lys-Gly) (interchain with G-Cter in SUMO2) cross-link. A Phosphothreonine modification is found at Thr290. Residues Lys293 and Lys297 each participate in a glycyl lysine isopeptide (Lys-Gly) (interchain with G-Cter in SUMO2) cross-link. Ser301 carries the phosphoserine modification. A compositionally biased stretch (low complexity) spans 301–320; that stretch reads SLTPSKGKTSGTTSSSSDSS. Thr303 carries the phosphothreonine modification. The stretch at 386 to 389 is one 2-1 repeat; the sequence is SLPA. The 2 X 4 AA repeats of S-L-P-A stretch occupies residues 386 to 520; it reads SLPASLGRGW…DIEILSSLPA (135 aa). The segment at 392-420 is required for interaction with SMN; the sequence is GRGWGREENLFSWKGAKGRGMRGRGRGRG. Ser403 bears the Phosphoserine mark. 4 repeat units span residues 413 to 414, 415 to 416, 417 to 418, and 419 to 420. The segment at 413–420 is 4 X 2 AA tandem repeats of R-G; sequence RGRGRGRG. A Glycyl lysine isopeptide (Lys-Gly) (interchain with G-Cter in SUMO2) cross-link involves residue Lys444. At Thr456 the chain carries Phosphothreonine. The region spanning 460 to 559 is the Tudor; atypical domain; it reads DYSLLPLLAA…ITVFWKELID (100 aa). A phosphoserine mark is found at Ser487 and Ser489. Lys496 participates in a covalent cross-link: Glycyl lysine isopeptide (Lys-Gly) (interchain with G-Cter in SUMO2). Residues 517-520 form a 2-2 repeat; it reads SLPA. Ser566 is modified (phosphoserine).

Belongs to the coilin family. Interacts with ANKS1B. Interacts with SMN1 (via Tudor domain). Interacts (via C-terminus) with AK6. Interacts with WRAP53/TCAB1. Interacts with HMBOX1. Interacts with PSME3; the interaction is inhibited by PSME3IP1. Interacts wit UBL5. In terms of processing, symmetrical dimethylation of arginine residues within the RG repeat region enhances affinity for SMN, and thus localization of SMN complexes to CBs. Post-translationally, phosphorylated by VRK1. Phosphorylation during mitosis is associated with disassembly of CBs. Found in all the cell types examined.

It localises to the nucleus. The protein resides in the cajal body. Component of nuclear coiled bodies, also known as Cajal bodies or CBs, which are involved in the modification and assembly of nucleoplasmic snRNPs. This chain is Coilin (COIL), found in Homo sapiens (Human).